A 358-amino-acid chain; its full sequence is Magnesium-protoporphyrin IX monomethyl ester [oxidative] cyclase 1 (358 aa).

This sequence belongs to the AcsF family. Fe cation is required as a cofactor.

It catalyses the reaction Mg-protoporphyrin IX 13-monomethyl ester + 3 NADPH + 3 O2 + 2 H(+) = 3,8-divinyl protochlorophyllide a + 3 NADP(+) + 5 H2O. The protein operates within porphyrin-containing compound metabolism; chlorophyll biosynthesis (light-independent). In terms of biological role, catalyzes the formation of the isocyclic ring in chlorophyll biosynthesis. Mediates the cyclase reaction, which results in the formation of divinylprotochlorophyllide (Pchlide) characteristic of all chlorophylls from magnesium-protoporphyrin IX 13-monomethyl ester (MgPMME). The protein is Magnesium-protoporphyrin IX monomethyl ester [oxidative] cyclase 1 of Synechocystis sp. (strain ATCC 27184 / PCC 6803 / Kazusa).